A 267-amino-acid chain; its full sequence is 5'-nucleotidase SurE (267 aa).

A divalent metal cation contacts are provided by Asp-14, Asp-15, Ser-45, and Asn-100.

This sequence belongs to the SurE nucleotidase family. A divalent metal cation serves as cofactor.

It localises to the cytoplasm. It catalyses the reaction a ribonucleoside 5'-phosphate + H2O = a ribonucleoside + phosphate. Nucleotidase that shows phosphatase activity on nucleoside 5'-monophosphates. This is 5'-nucleotidase SurE from Methanosarcina acetivorans (strain ATCC 35395 / DSM 2834 / JCM 12185 / C2A).